Reading from the N-terminus, the 170-residue chain is MGVDQPLGENIITTSLDSLVNWARKSSIWPMTFGLACCAIEMMATGAAKHDLDRFGIIFRASPRQADCIIIAGTVTKKMLPVIKTVYEQMPEPKWVVAMGACACSGGVFDTYSVVQGIDEALPVDVYIPGCPPRPEALLYGLMKLQDKIANERNSFGSSIGLGERLEPAA.

Residues Cys-37, Cys-38, Cys-102, and Cys-131 each coordinate [4Fe-4S] cluster.

This sequence belongs to the complex I 20 kDa subunit family. As to quaternary structure, NDH-1 is composed of 14 different subunits. Subunits NuoB, C, D, E, F, and G constitute the peripheral sector of the complex. It depends on [4Fe-4S] cluster as a cofactor.

It is found in the cell inner membrane. It catalyses the reaction a quinone + NADH + 5 H(+)(in) = a quinol + NAD(+) + 4 H(+)(out). In terms of biological role, NDH-1 shuttles electrons from NADH, via FMN and iron-sulfur (Fe-S) centers, to quinones in the respiratory chain. The immediate electron acceptor for the enzyme in this species is believed to be ubiquinone. Couples the redox reaction to proton translocation (for every two electrons transferred, four hydrogen ions are translocated across the cytoplasmic membrane), and thus conserves the redox energy in a proton gradient. In Geobacter sp. (strain M21), this protein is NADH-quinone oxidoreductase subunit B.